A 448-amino-acid polypeptide reads, in one-letter code: Exodeoxyribonuclease 7 large subunit (448 aa).

This sequence belongs to the XseA family. Heterooligomer composed of large and small subunits.

The protein localises to the cytoplasm. The catalysed reaction is Exonucleolytic cleavage in either 5'- to 3'- or 3'- to 5'-direction to yield nucleoside 5'-phosphates.. Functionally, bidirectionally degrades single-stranded DNA into large acid-insoluble oligonucleotides, which are then degraded further into small acid-soluble oligonucleotides. The protein is Exodeoxyribonuclease 7 large subunit of Shewanella baltica (strain OS195).